Here is a 373-residue protein sequence, read N- to C-terminus: LIM domain-binding protein 1 (373 aa).

Disordered regions lie at residues 248–297 and 329–373; these read PPAE…LSSQ and DAAN…QASQ. The segment covering 266-282 has biased composition (low complexity); it reads SGGSTMSSGGGNTNNSN. The segment covering 288–297 has biased composition (polar residues); that stretch reads PASTFALSSQ. The LIM interaction domain (LID) domain maps to 298 to 337; that stretch reads DVMVVGEPTLMGGEFGDEDERLITRLENTQFDAANGIDDE.

The protein belongs to the LDB family. As to quaternary structure, forms homodimers and heterodimers. Interacts with and activates lhx1/lim1. The stoichiometry of lhx1/lim1 and ldb1 is important for their function and an excess of ldb1 can inhibit lhx1/lim1 function. When bound to lhx1/lim1, escapes degradation by rnf12. Interacts with the N-terminal region of rnf12. Undergoes rnf12-mediated ubiquitin-proteasome-dependent degradation.

It localises to the nucleus. Its function is as follows. Binds to the LIM domain of a wide variety of LIM domain-containing transcription factors. Acts as a coactivator together with otx2 to stimulate lhx1/lim1-mediated activation of the gsc promoter in the Spemann organizer. Acts synergistically with lhx1/lim1 and ssbp in axis formation. The sequence is that of LIM domain-binding protein 1 from Xenopus tropicalis (Western clawed frog).